The following is a 424-amino-acid chain: L-glutamine:2-deoxy-scyllo-inosose aminotransferase (424 aa).

At K202 the chain carries N6-(pyridoxal phosphate)lysine.

Belongs to the DegT/DnrJ/EryC1 family. L-glutamine:2-deoxy-scyllo-inosose/scyllo-inosose aminotransferase subfamily. Pyridoxal 5'-phosphate serves as cofactor.

It carries out the reaction 2-deoxy-L-scyllo-inosose + L-glutamine = 2-deoxy-scyllo-inosamine + 2-oxoglutaramate. The enzyme catalyses 3-amino-2,3-dideoxy-scyllo-inosose + L-glutamine = 2-deoxystreptamine + 2-oxoglutaramate. Its pathway is metabolic intermediate biosynthesis; 2-deoxystreptamine biosynthesis; 2-deoxystreptamine from D-glucose 6-phosphate: step 2/4. It functions in the pathway antibiotic biosynthesis; lividomycin biosynthesis. In terms of biological role, catalyzes the PLP-dependent transamination of 2-deoxy-scyllo-inosose (2-DOI) to form 2-deoxy-scyllo-inosamine (2-DOIA) using L-glutamine as the amino donor. Also catalyzes the transamination of 3-amino-2,3-dideoxy-scyllo-inosose (keto-2-DOIA) into 2-deoxystreptamine (2-DOS). This is L-glutamine:2-deoxy-scyllo-inosose aminotransferase (livS) from Streptomyces lividus.